Here is a 38-residue protein sequence, read N- to C-terminus: Large ribosomal subunit protein bL36B (38 aa).

The protein belongs to the bacterial ribosomal protein bL36 family.

This is Large ribosomal subunit protein bL36B from Prochlorococcus marinus (strain MIT 9515).